A 298-amino-acid polypeptide reads, in one-letter code: tRNA pseudouridine synthase A (298 aa).

Catalysis depends on D56, which acts as the Nucleophile. Position 125 (Y125) interacts with substrate.

This sequence belongs to the tRNA pseudouridine synthase TruA family. As to quaternary structure, homodimer.

The catalysed reaction is uridine(38/39/40) in tRNA = pseudouridine(38/39/40) in tRNA. Formation of pseudouridine at positions 38, 39 and 40 in the anticodon stem and loop of transfer RNAs. This Bifidobacterium animalis subsp. lactis (strain AD011) protein is tRNA pseudouridine synthase A.